Consider the following 526-residue polypeptide: Anthranilate synthase component 1 (526 aa).

Residues serine 40 and 304–306 (PYM) contribute to the L-tryptophan site. 341–342 (GT) serves as a coordination point for chorismate. Glutamate 374 lines the Mg(2+) pocket. Chorismate contacts are provided by residues tyrosine 461, arginine 481, 495-497 (GAG), and glycine 497. Glutamate 510 is a binding site for Mg(2+).

The protein belongs to the anthranilate synthase component I family. As to quaternary structure, heterotetramer consisting of two non-identical subunits: a beta subunit (TrpG) and a large alpha subunit (TrpE). It depends on Mg(2+) as a cofactor.

It catalyses the reaction chorismate + L-glutamine = anthranilate + pyruvate + L-glutamate + H(+). It functions in the pathway amino-acid biosynthesis; L-tryptophan biosynthesis; L-tryptophan from chorismate: step 1/5. Its activity is regulated as follows. Feedback inhibited by tryptophan. Part of a heterotetrameric complex that catalyzes the two-step biosynthesis of anthranilate, an intermediate in the biosynthesis of L-tryptophan. In the first step, the glutamine-binding beta subunit (TrpG) of anthranilate synthase (AS) provides the glutamine amidotransferase activity which generates ammonia as a substrate that, along with chorismate, is used in the second step, catalyzed by the large alpha subunit of AS (TrpE) to produce anthranilate. In the absence of TrpG, TrpE can synthesize anthranilate directly from chorismate and high concentrations of ammonia. The chain is Anthranilate synthase component 1 (trpE) from Buchnera aphidicola subsp. Tetraneura caerulescens.